Consider the following 294-residue polypeptide: MFLRRLGGWLPRPWGRRKPMRPDPPYPEPRRVDSSSENSGSDWDSAPETMEDVGHPKTKDSGALRVSGAASEPSKEEPQVEQLGSKRMDSLKWDQPISSTQESGRLEAGGASPKLRWDHVDSGGTRRPGVSPEGGLSVPGPGAPLEKPGRREKLLGWLRGEPGAPSRYLGGPEECLQISTNLTLHLLELLASALLALCSRPLRAALDTLGLRGPLGLWLHGLLSFLAALHGLHAVLSLLTAHPLHFACLFGLLQALVLAVSLREPNGDEAATDWESEGLEREGEEQRGDPGKGL.

Disordered regions lie at residues 1-148 (MFLR…LEKP) and 268-294 (DEAA…GKGL). A phosphoserine mark is found at Ser34 and Ser35. Low complexity predominate over residues 35-44 (SSENSGSDWD). Basic and acidic residues predominate over residues 52-62 (DVGHPKTKDSG). Ser71 and Ser90 each carry phosphoserine. 2 stretches are compositionally biased toward basic and acidic residues: residues 73-92 (PSKE…DSLK) and 278-294 (GLER…GKGL).

This is an uncharacterized protein from Homo sapiens (Human).